A 442-amino-acid polypeptide reads, in one-letter code: MNPLRTLCVMACLLAVAMGNPQSGNRSGRRSNSLDNVEQPSNWVNPREVEELPNLKEVTLKKLQEMSLEEGATLLDKLYHLSQFNHVFKPDYTPEPSQIRGYIVGERGQKIEFNLNTLVEKVKRQQKFGDDEVTIFIQGLPETNTQVQKATRKLVQAYQQRYNLQPYETTDYSNEEQSQRSSSEEQQTQRRKQNGEQDDTKTGDLIVIQLGNAIEDFEQYATLNIERLGEIIGNRLVELTNTVNVPQEIIHLIGSGPAAHVAGVAGRQFTRQTGHKLRRITALDPTKIYGKPEERLTGLARGDADFVDAIHTSAYGMGTSQRLANVDFFPNGPSTGVPGADNVVEATMRATRYFAESVRPGNERNFPSVAASSYQEYKQNKGYGKRGYMGIATDFDLQGDYILQVNSKSPFGRSTPAQKQTGYHQVHQPWRQSSSNQGSRRQ.

Residues 1 to 19 (MNPLRTLCVMACLLAVAMG) form the signal peptide. Positions 21-33 (PQSGNRSGRRSNS) are enriched in low complexity. The tract at residues 21–44 (PQSGNRSGRRSNSLDNVEQPSNWV) is disordered. 2 positions are modified to phosphoserine: Ser-31 and Ser-33. Polar residues predominate over residues 34-44 (LDNVEQPSNWV). A Phosphoserine modification is found at Ser-82. 2 disordered regions span residues 165–200 (QPYE…QDDT) and 408–442 (KSPF…SRRQ). Position 170 is a phosphothreonine (Thr-170). Residue Tyr-172 is modified to Sulfotyrosine. A phosphoserine mark is found at Ser-173, Ser-178, Ser-181, Ser-182, and Ser-183. 2 stretches are compositionally biased toward low complexity: residues 175-186 (EEQSQRSSSEEQ) and 431-442 (RQSSSNQGSRRQ).

Belongs to the AB hydrolase superfamily. Lipase family. In terms of processing, tyrosine sulfation occurs in the female only and plays an essential functional role. In terms of tissue distribution, synthesized in the fat body and ovarian follicle cells and accumulate in the oocyte.

It localises to the secreted. Functionally, vitellogenin is the major yolk protein of eggs where it is used as a food source during embryogenesis. Vitellogenins and their receptor yl/yolkless are required for maintenance of microtubule plus-end orientation towards the posterior pole of oocytes. Involved in polarized localization of germ plasm components, such as osk mRNA and vas protein, to the oocyte posterior cortex. Receptor-mediated endocytosis by yl/yolkless is crucial for actin reorganization, mediated by osk isoform A/Long, required to anchor germ plasm components to the oocyte cortex. The chain is Vitellogenin-2 (Yp2) from Drosophila melanogaster (Fruit fly).